We begin with the raw amino-acid sequence, 431 residues long: tRNA-2-methylthio-N(6)-dimethylallyladenosine synthase (431 aa).

The 116-residue stretch at 2 to 117 (KKLFIETLGC…ITEVVDKKHA (116 aa)) folds into the MTTase N-terminal domain. Residues cysteine 11, cysteine 48, cysteine 80, cysteine 149, cysteine 153, and cysteine 156 each coordinate [4Fe-4S] cluster. Residues 135–368 (RTNPFKAMVN…QTRHTEILDE (234 aa)) form the Radical SAM core domain. Residues 371–431 (DAQLGKVHEV…SRGALDGVLV (61 aa)) enclose the TRAM domain.

It belongs to the methylthiotransferase family. MiaB subfamily. Monomer. The cofactor is [4Fe-4S] cluster.

The protein localises to the cytoplasm. It catalyses the reaction N(6)-dimethylallyladenosine(37) in tRNA + (sulfur carrier)-SH + AH2 + 2 S-adenosyl-L-methionine = 2-methylsulfanyl-N(6)-dimethylallyladenosine(37) in tRNA + (sulfur carrier)-H + 5'-deoxyadenosine + L-methionine + A + S-adenosyl-L-homocysteine + 2 H(+). Functionally, catalyzes the methylthiolation of N6-(dimethylallyl)adenosine (i(6)A), leading to the formation of 2-methylthio-N6-(dimethylallyl)adenosine (ms(2)i(6)A) at position 37 in tRNAs that read codons beginning with uridine. The protein is tRNA-2-methylthio-N(6)-dimethylallyladenosine synthase of Sulfurovum sp. (strain NBC37-1).